The primary structure comprises 265 residues: Reduced viability upon starvation protein 161 (265 aa).

One can recognise a BAR domain in the interval 15-239 (HSVIIKNVDK…LDQQSRDDYA (225 aa)). Residues 126 to 193 (YFKEIEEAIK…NQLKTELPQL (68 aa)) are a coiled coil.

The protein resides in the cytoplasm. It localises to the cytoskeleton. Component of a cytoskeletal structure that is required for the formation of endocytic vesicles at the plasma membrane level. The sequence is that of Reduced viability upon starvation protein 161 (RVS161) from Saccharomyces cerevisiae (strain ATCC 204508 / S288c) (Baker's yeast).